Here is a 58-residue protein sequence, read N- to C-terminus: MKRQKRDKLTRAHSKGYQAGISGRSKDICPFQQNDARSEWLGGWREAVEDRHVGLSVK.

Positions 1–14 are enriched in basic residues; it reads MKRQKRDKLTRAHS. A disordered region spans residues 1–25; the sequence is MKRQKRDKLTRAHSKGYQAGISGRS.

Belongs to the ribosome modulation factor family.

It localises to the cytoplasm. Its function is as follows. During stationary phase, converts 70S ribosomes to an inactive dimeric form (100S ribosomes). The protein is Ribosome modulation factor of Alteromonas naphthalenivorans.